We begin with the raw amino-acid sequence, 394 residues long: Metallophosphoesterase 1 (394 aa).

A helical transmembrane segment spans residues 27 to 47 (TVVVISVLLFCEYFIYYLVLF). Positions 74, 116, 154, 247, 301, and 303 each coordinate a divalent metal cation. A helical transmembrane segment spans residues 354-374 (TVLTTYCAAAAFLLVLILAHF).

This sequence belongs to the metallophosphoesterase superfamily. MPPE1 family. In terms of assembly, interacts with GPI-anchor proteins (via the GPI portion). Interacts with TMED10. Mn(2+) serves as cofactor.

It localises to the endoplasmic reticulum-Golgi intermediate compartment membrane. Metallophosphoesterase that catalyzes the removal of a side-chain ethanolamine-phosphate (EtNP) from the second mannose of the GPI-anchor protein intermediate. Participates in the glycan remodeling steps of GPI-anchor maturation to allow an efficient transport of GPI-anchor proteins from the endoplasmic reticulum to the Golgi. This is Metallophosphoesterase 1 from Rattus norvegicus (Rat).